A 223-amino-acid chain; its full sequence is Neurotrophic factor BDNF precursor form (223 aa).

Residues 1–5 form the signal peptide; sequence SCMKA. The propeptide occupies 6-114; the sequence is APMKEVSIRG…AANMSMRVRR (109 aa). Asn-107 carries an N-linked (GlcNAc...) asparagine glycan. 2 disulfide bridges follow: Cys-127/Cys-194 and Cys-172/Cys-223.

Belongs to the NGF-beta family.

It localises to the secreted. Functionally, promotes the survival of neuronal populations that are all located either in the central nervous system or directly connected to it. The chain is Neurotrophic factor BDNF precursor form (BDNF) from Boa constrictor (Boa).